A 354-amino-acid polypeptide reads, in one-letter code: tRNA-specific 2-thiouridylase MnmA (354 aa).

ATP is bound by residues 6–13 (LLSGGVDS) and leucine 33. Catalysis depends on cysteine 100, which acts as the Nucleophile. Cysteines 100 and 195 form a disulfide. Position 123 (glycine 123) interacts with ATP. The tract at residues 145-147 (KDQ) is interaction with tRNA. Cysteine 195 functions as the Cysteine persulfide intermediate in the catalytic mechanism.

Belongs to the MnmA/TRMU family.

The protein localises to the cytoplasm. It catalyses the reaction S-sulfanyl-L-cysteinyl-[protein] + uridine(34) in tRNA + AH2 + ATP = 2-thiouridine(34) in tRNA + L-cysteinyl-[protein] + A + AMP + diphosphate + H(+). In terms of biological role, catalyzes the 2-thiolation of uridine at the wobble position (U34) of tRNA, leading to the formation of s(2)U34. The polypeptide is tRNA-specific 2-thiouridylase MnmA (Borrelia hermsii (strain HS1 / DAH)).